A 553-amino-acid chain; its full sequence is Copine-9 (553 aa).

C2 domains follow at residues 1–125 and 132–255; these read MSLS…ERPL and KCGT…FTVY. 5 residues coordinate Ca(2+): aspartate 163, aspartate 169, aspartate 225, aspartate 227, and aspartate 233. The VWFA domain maps to 299–500; the sequence is NFTVAIDFTA…VQFVPFRDYV (202 aa). Residues 531 to 553 are disordered; the sequence is TRDIQPRPPPPVSPNPTPAPEQP. Pro residues predominate over residues 536 to 553; the sequence is PRPPPPVSPNPTPAPEQP.

It belongs to the copine family. It depends on Ca(2+) as a cofactor.

Probable calcium-dependent phospholipid-binding protein that may play a role in calcium-mediated intracellular processes. Plays a role in dendrite formation by melanocytes. This chain is Copine-9, found in Mus musculus (Mouse).